A 230-amino-acid polypeptide reads, in one-letter code: Fibrillarin-like rRNA/tRNA 2'-O-methyltransferase (230 aa).

S-adenosyl-L-methionine-binding positions include 87–88 (TT), 105–106 (EY), 130–131 (DA), and 150–153 (DVAQ).

As to quaternary structure, interacts with nop5. Component of box C/D small ribonucleoprotein (sRNP) particles that contain rpl7ae, FlpA and nop5, plus a guide RNA.

Functionally, involved in pre-rRNA and tRNA processing. Utilizes the methyl donor S-adenosyl-L-methionine to catalyze the site-specific 2'-hydroxyl methylation of ribose moieties in rRNA and tRNA. Site specificity is provided by a guide RNA that base pairs with the substrate. Methylation occurs at a characteristic distance from the sequence involved in base pairing with the guide RNA. In Methanocaldococcus jannaschii (strain ATCC 43067 / DSM 2661 / JAL-1 / JCM 10045 / NBRC 100440) (Methanococcus jannaschii), this protein is Fibrillarin-like rRNA/tRNA 2'-O-methyltransferase.